A 214-amino-acid polypeptide reads, in one-letter code: Probable nicotinate-nucleotide adenylyltransferase (214 aa).

It belongs to the NadD family.

The enzyme catalyses nicotinate beta-D-ribonucleotide + ATP + H(+) = deamido-NAD(+) + diphosphate. Its pathway is cofactor biosynthesis; NAD(+) biosynthesis; deamido-NAD(+) from nicotinate D-ribonucleotide: step 1/1. Functionally, catalyzes the reversible adenylation of nicotinate mononucleotide (NaMN) to nicotinic acid adenine dinucleotide (NaAD). The chain is Probable nicotinate-nucleotide adenylyltransferase from Psychromonas ingrahamii (strain DSM 17664 / CCUG 51855 / 37).